The sequence spans 448 residues: UPF0210 protein Pars_1033 (448 aa).

This sequence belongs to the UPF0210 family.

The polypeptide is UPF0210 protein Pars_1033 (Pyrobaculum arsenaticum (strain DSM 13514 / JCM 11321 / PZ6)).